The following is a 218-amino-acid chain: 7-cyano-7-deazaguanine synthase (218 aa).

11–21 (LSGGMDSATLL) contributes to the ATP binding site. C193, C201, C204, and C207 together coordinate Zn(2+).

The protein belongs to the QueC family. Zn(2+) serves as cofactor.

The enzyme catalyses 7-carboxy-7-deazaguanine + NH4(+) + ATP = 7-cyano-7-deazaguanine + ADP + phosphate + H2O + H(+). The protein operates within purine metabolism; 7-cyano-7-deazaguanine biosynthesis. Functionally, catalyzes the ATP-dependent conversion of 7-carboxy-7-deazaguanine (CDG) to 7-cyano-7-deazaguanine (preQ(0)). This Aquifex aeolicus (strain VF5) protein is 7-cyano-7-deazaguanine synthase.